The sequence spans 225 residues: ATP-dependent dethiobiotin synthetase BioD (225 aa).

15–20 lines the ATP pocket; it reads EIGKTF. Mg(2+) is bound at residue Thr-19. Lys-40 is an active-site residue. ATP-binding positions include Asp-57, 118 to 121, 178 to 179, and 207 to 209; these read EGVG, NR, and PHV. 2 residues coordinate Mg(2+): Asp-57 and Glu-118.

This sequence belongs to the dethiobiotin synthetase family. Homodimer. It depends on Mg(2+) as a cofactor.

It localises to the cytoplasm. The catalysed reaction is (7R,8S)-7,8-diammoniononanoate + CO2 + ATP = (4R,5S)-dethiobiotin + ADP + phosphate + 3 H(+). Its pathway is cofactor biosynthesis; biotin biosynthesis; biotin from 7,8-diaminononanoate: step 1/2. In terms of biological role, catalyzes a mechanistically unusual reaction, the ATP-dependent insertion of CO2 between the N7 and N8 nitrogen atoms of 7,8-diaminopelargonic acid (DAPA, also called 7,8-diammoniononanoate) to form a ureido ring. The protein is ATP-dependent dethiobiotin synthetase BioD of Aromatoleum aromaticum (strain DSM 19018 / LMG 30748 / EbN1) (Azoarcus sp. (strain EbN1)).